The following is a 420-amino-acid chain: Tyrosine--tRNA ligase (420 aa).

Y36 lines the L-tyrosine pocket. The 'HIGH' region signature appears at 41–50 (PTADSLHIGH). Residues Y170 and Q174 each coordinate L-tyrosine. Positions 231-235 (KFGKS) match the 'KMSKS' region motif. K234 serves as a coordination point for ATP. In terms of domain architecture, S4 RNA-binding spans 353–420 (SNIIDVLIET…KKKYFMVNYK (68 aa)).

Belongs to the class-I aminoacyl-tRNA synthetase family. TyrS type 1 subfamily. As to quaternary structure, homodimer.

The protein resides in the cytoplasm. It carries out the reaction tRNA(Tyr) + L-tyrosine + ATP = L-tyrosyl-tRNA(Tyr) + AMP + diphosphate + H(+). Its function is as follows. Catalyzes the attachment of tyrosine to tRNA(Tyr) in a two-step reaction: tyrosine is first activated by ATP to form Tyr-AMP and then transferred to the acceptor end of tRNA(Tyr). The sequence is that of Tyrosine--tRNA ligase from Staphylococcus haemolyticus (strain JCSC1435).